The sequence spans 707 residues: Elongation factor G (707 aa).

The 289-residue stretch at 8–296 folds into the tr-type G domain; the sequence is ERYRNFGIMA…AVVDFLPAPT (289 aa). GTP is bound by residues 17–24, 94–98, and 148–151; these read AHIDAGKT, DTPGH, and NKMD.

The protein belongs to the TRAFAC class translation factor GTPase superfamily. Classic translation factor GTPase family. EF-G/EF-2 subfamily.

It localises to the cytoplasm. Functionally, catalyzes the GTP-dependent ribosomal translocation step during translation elongation. During this step, the ribosome changes from the pre-translocational (PRE) to the post-translocational (POST) state as the newly formed A-site-bound peptidyl-tRNA and P-site-bound deacylated tRNA move to the P and E sites, respectively. Catalyzes the coordinated movement of the two tRNA molecules, the mRNA and conformational changes in the ribosome. The protein is Elongation factor G of Paracoccus denitrificans (strain Pd 1222).